The following is a 358-amino-acid chain: Dual-specificity RNA methyltransferase RlmN (358 aa).

The active-site Proton acceptor is the glutamate 91. The Radical SAM core domain maps to 98 to 335 (SQGRITQCLS…AIIRKSKGAD (238 aa)). Cysteine 105 and cysteine 340 are joined by a disulfide. [4Fe-4S] cluster-binding residues include cysteine 112, cysteine 116, and cysteine 119. Residues 164 to 165 (GE), serine 196, 219 to 221 (SLH), and asparagine 295 contribute to the S-adenosyl-L-methionine site. The S-methylcysteine intermediate role is filled by cysteine 340.

This sequence belongs to the radical SAM superfamily. RlmN family. It depends on [4Fe-4S] cluster as a cofactor.

It is found in the cytoplasm. The catalysed reaction is adenosine(2503) in 23S rRNA + 2 reduced [2Fe-2S]-[ferredoxin] + 2 S-adenosyl-L-methionine = 2-methyladenosine(2503) in 23S rRNA + 5'-deoxyadenosine + L-methionine + 2 oxidized [2Fe-2S]-[ferredoxin] + S-adenosyl-L-homocysteine. The enzyme catalyses adenosine(37) in tRNA + 2 reduced [2Fe-2S]-[ferredoxin] + 2 S-adenosyl-L-methionine = 2-methyladenosine(37) in tRNA + 5'-deoxyadenosine + L-methionine + 2 oxidized [2Fe-2S]-[ferredoxin] + S-adenosyl-L-homocysteine. Its function is as follows. Specifically methylates position 2 of adenine 2503 in 23S rRNA and position 2 of adenine 37 in tRNAs. m2A2503 modification seems to play a crucial role in the proofreading step occurring at the peptidyl transferase center and thus would serve to optimize ribosomal fidelity. The protein is Dual-specificity RNA methyltransferase RlmN of Oleidesulfovibrio alaskensis (strain ATCC BAA-1058 / DSM 17464 / G20) (Desulfovibrio alaskensis).